A 180-amino-acid chain; its full sequence is Large ribosomal subunit protein uL15 (180 aa).

Residues 1–62 are disordered; that stretch reads MKKERLEQAS…KTAGRGSKGQ (62 aa).

Belongs to the universal ribosomal protein uL15 family. In terms of assembly, part of the 50S ribosomal subunit.

Functionally, binds to the 23S rRNA. This chain is Large ribosomal subunit protein uL15, found in Leptospira interrogans serogroup Icterohaemorrhagiae serovar copenhageni (strain Fiocruz L1-130).